The sequence spans 300 residues: Jacalin-related lectin 33 (300 aa).

Positions 1–20 are disordered; sequence MAQKVEAGGGAGGASWDDGV. At alanine 2 the chain carries N-acetylalanine. 2 consecutive Jacalin-type lectin domains span residues 2 to 146 and 154 to 297; these read AQKV…YFAT and AKKL…HVMP.

Belongs to the jacalin lectin family. Component of the PYK10 complex, at least composed of PYK10/BGLU23, BGLU21, BGLU22, JAL22, JAL23, PBP1/JAL30, PBP2/JAL31, JAL32, JAL33, JAL34, JAL35, GLL22 and GLL23.

Its function is as follows. Sugar-binding protein showing significant affinity for (Glc alpha(1-4)Glc)(3) maltohexaose, (Glc alpha(1-6)Glc)(3) isomaltohexaose, Gal alpha(1-4)Gal beta(1-4)Glc, GalNAc alpha(1-3)(Fuc alpha(1-2)) and Gal beta(1-3)(Fuc alpha(1-4))GlcNAc beta(1-3)Gal beta(1-4)Glc. The chain is Jacalin-related lectin 33 (JAL33) from Arabidopsis thaliana (Mouse-ear cress).